The following is a 239-amino-acid chain: Proteasome activator complex subunit 2 (239 aa).

A2 carries the N-acetylalanine modification. S10 is modified (phosphoserine).

It belongs to the PA28 family. In terms of assembly, heterodimer of PSME1 and PSME2, which forms a hexameric ring.

Functionally, implicated in immunoproteasome assembly and required for efficient antigen processing. The PA28 activator complex enhances the generation of class I binding peptides by altering the cleavage pattern of the proteasome. The sequence is that of Proteasome activator complex subunit 2 (PSME2) from Homo sapiens (Human).